The sequence spans 58 residues: Large ribosomal subunit protein uL30 (58 aa).

It belongs to the universal ribosomal protein uL30 family. As to quaternary structure, part of the 50S ribosomal subunit.

The chain is Large ribosomal subunit protein uL30 from Pelobacter propionicus (strain DSM 2379 / NBRC 103807 / OttBd1).